A 386-amino-acid chain; its full sequence is Histidinol-phosphate aminotransferase (386 aa).

Residue lysine 240 is modified to N6-(pyridoxal phosphate)lysine.

It belongs to the class-II pyridoxal-phosphate-dependent aminotransferase family. Histidinol-phosphate aminotransferase subfamily. Homodimer. Requires pyridoxal 5'-phosphate as cofactor.

The enzyme catalyses L-histidinol phosphate + 2-oxoglutarate = 3-(imidazol-4-yl)-2-oxopropyl phosphate + L-glutamate. Its pathway is amino-acid biosynthesis; L-histidine biosynthesis; L-histidine from 5-phospho-alpha-D-ribose 1-diphosphate: step 7/9. The polypeptide is Histidinol-phosphate aminotransferase (Bifidobacterium longum (strain NCC 2705)).